The chain runs to 841 residues: Probable alpha-glucuronidase A (841 aa).

Residues 1-19 form the signal peptide; that stretch reads MLRLPLVLVWSLWASLTVA. N-linked (GlcNAc...) asparagine glycans are attached at residues Asn-50, Asn-104, Asn-223, Asn-280, Asn-311, Asn-344, Asn-466, Asn-528, Asn-577, Asn-683, Asn-724, and Asn-733.

It belongs to the glycosyl hydrolase 67 family.

It localises to the secreted. It carries out the reaction an alpha-D-glucuronoside + H2O = D-glucuronate + an alcohol. In terms of biological role, alpha-glucuronidase involved in the hydrolysis of xylan, a major structural heterogeneous polysaccharide found in plant biomass representing the second most abundant polysaccharide in the biosphere, after cellulose. Releases 4-O-methylglucuronic acid from xylan. This Aspergillus terreus (strain NIH 2624 / FGSC A1156) protein is Probable alpha-glucuronidase A (aguA).